The sequence spans 188 residues: Pyridoxal 5'-phosphate synthase subunit PdxT (188 aa).

Position 47 to 49 (47 to 49 (GES)) interacts with L-glutamine. Residue Cys79 is the Nucleophile of the active site. Residues Arg105 and 134–135 (IR) contribute to the L-glutamine site. Catalysis depends on charge relay system residues His170 and Glu172.

The protein belongs to the glutaminase PdxT/SNO family. As to quaternary structure, in the presence of PdxS, forms a dodecamer of heterodimers. Only shows activity in the heterodimer.

The enzyme catalyses aldehydo-D-ribose 5-phosphate + D-glyceraldehyde 3-phosphate + L-glutamine = pyridoxal 5'-phosphate + L-glutamate + phosphate + 3 H2O + H(+). It carries out the reaction L-glutamine + H2O = L-glutamate + NH4(+). It participates in cofactor biosynthesis; pyridoxal 5'-phosphate biosynthesis. Functionally, catalyzes the hydrolysis of glutamine to glutamate and ammonia as part of the biosynthesis of pyridoxal 5'-phosphate. The resulting ammonia molecule is channeled to the active site of PdxS. In Listeria monocytogenes serovar 1/2a (strain ATCC BAA-679 / EGD-e), this protein is Pyridoxal 5'-phosphate synthase subunit PdxT.